The following is a 435-amino-acid chain: GTPase Der (435 aa).

EngA-type G domains follow at residues 4–167 and 175–350; these read PVVA…PAEK and ISFS…DNQN. GTP contacts are provided by residues 10–17, 57–61, 119–122, 181–188, 228–232, and 293–296; these read GQPNVGKS, DTGGI, NKAD, GRPNVGKS, DTAGI, and NKWD. The 85-residue stretch at 351–435 folds into the KH-like domain; the sequence is QRIQSSVLND…PIKILPRKRK (85 aa).

It belongs to the TRAFAC class TrmE-Era-EngA-EngB-Septin-like GTPase superfamily. EngA (Der) GTPase family. Associates with the 50S ribosomal subunit.

In terms of biological role, GTPase that plays an essential role in the late steps of ribosome biogenesis. The polypeptide is GTPase Der (Lactobacillus acidophilus (strain ATCC 700396 / NCK56 / N2 / NCFM)).